A 183-amino-acid polypeptide reads, in one-letter code: Inner membrane-spanning protein YciB (183 aa).

5 helical membrane passes run 22 to 44 (IYTATGALVVVTGLQLIYSWVRY), 54 to 74 (TFLLVGFFGGLTVFFHDDAFI), 76 to 96 (WKVTVINILFALGLLISRYGF), 119 to 139 (VNLAWVGFFTVCGLLNLYVAF), and 149 to 169 (FKVFGLLGMTLVFTLLSGVYL).

The protein belongs to the YciB family.

Its subcellular location is the cell inner membrane. In terms of biological role, plays a role in cell envelope biogenesis, maintenance of cell envelope integrity and membrane homeostasis. The chain is Inner membrane-spanning protein YciB from Aeromonas salmonicida (strain A449).